Here is a 436-residue protein sequence, read N- to C-terminus: Serine/threonine-protein kinase 40 (436 aa).

The span at 1–10 (MKRRASDRGA) shows a compositional bias: basic and acidic residues. Residues 1–25 (MKRRASDRGAGETSARAKALGSGIS) form a disordered region. The region spanning 35-332 (FILGPRLGNS…DVLEALSSII (298 aa)) is the Protein kinase domain. ATP is bound by residues 41–49 (LGNSPVPSI) and lysine 66. Aspartate 197 (proton acceptor) is an active-site residue. Residues 396 to 417 (RSWVPKRQSGAGVPPVRRLGHD) are disordered.

The protein belongs to the protein kinase superfamily. CAMK Ser/Thr protein kinase family.

The protein localises to the nucleus. The protein resides in the cytoplasm. It catalyses the reaction L-seryl-[protein] + ATP = O-phospho-L-seryl-[protein] + ADP + H(+). The catalysed reaction is L-threonyl-[protein] + ATP = O-phospho-L-threonyl-[protein] + ADP + H(+). Functionally, may be a negative regulator of NF-kappa-B and p53-mediated gene transcription. The chain is Serine/threonine-protein kinase 40 (STK40) from Bos taurus (Bovine).